The primary structure comprises 101 residues: Large ribosomal subunit protein uL23 (101 aa).

Belongs to the universal ribosomal protein uL23 family. As to quaternary structure, part of the 50S ribosomal subunit. Contacts protein L29, and trigger factor when it is bound to the ribosome.

Functionally, one of the early assembly proteins it binds 23S rRNA. One of the proteins that surrounds the polypeptide exit tunnel on the outside of the ribosome. Forms the main docking site for trigger factor binding to the ribosome. The sequence is that of Large ribosomal subunit protein uL23 from Paenarthrobacter aurescens (strain TC1).